Reading from the N-terminus, the 206-residue chain is Putative acetyltransferase OgpAT (206 aa).

An N-acetyltransferase domain is found at 5–205; sequence VVIRRATAAD…EVVVGRRLLD (201 aa). Acetyl-CoA contacts are provided by residues 135–138, 144–148, 175–177, and histidine 184; these read HIDL, GRGVG, and NPR.

It belongs to the acetyltransferase family. As to quaternary structure, monomer.

Functionally, binds acetyl-CoA, but not butyryl-CoA or decanoyl-CoA. May have acetyltransferase activity. In Oceanicola granulosus (strain ATCC BAA-861 / DSM 15982 / KCTC 12143 / HTCC2516), this protein is Putative acetyltransferase OgpAT.